We begin with the raw amino-acid sequence, 424 residues long: MVFIDTARIYIKAGDGGNGFISFRREKYVPYGGPDGGDGGKGGDVIFIADPNLSTLLDFKYKRKYIAENGENGKSKNQYGKDGEDLYIKVPVGTTIINDETGEVIADLIKPYQKAIVLKGGKGGRGNAKFATPTLKTPRFAESGEKGREMWVRLELKLLADVGLVGFPNAGKSTLLASCSRARPKIANYPFTTLTPNLGVVEHKGKSFVMADIPGLIEGAHRGEGLGHDFLRHIERTKMLIHVVDVSGSEGRDPVEDFEKINEELRLYDERLVTLPQIVAANKMDLPEGKEKYPRFEEEIKKRGYEVYPISALTKEGLDALLDKTIEILSSIPAEKIEEVPEVIVYNPPEEEETLEVEVKGNTYYLKGSKIDKLLKRINLQDEHSLRYFEILLRKSGVIDALKEKGFKSGDVINVRDFEFEYYE.

In terms of domain architecture, Obg spans 1 to 159; it reads MVFIDTARIY…MWVRLELKLL (159 aa). Residues 160 to 330 enclose the OBG-type G domain; it reads ADVGLVGFPN…LLDKTIEILS (171 aa). Residues 166–173, 191–195, 212–215, 282–285, and 311–313 each bind GTP; these read GFPNAGKS, FTTLT, DIPG, NKMD, and SAL. Residues Ser173 and Thr193 each coordinate Mg(2+). The region spanning 347-424 is the OCT domain; that stretch reads NPPEEEETLE…VRDFEFEYYE (78 aa).

The protein belongs to the TRAFAC class OBG-HflX-like GTPase superfamily. OBG GTPase family. In terms of assembly, monomer. Requires Mg(2+) as cofactor.

The protein resides in the cytoplasm. Functionally, an essential GTPase which binds GTP, GDP and possibly (p)ppGpp with moderate affinity, with high nucleotide exchange rates and a fairly low GTP hydrolysis rate. Plays a role in control of the cell cycle, stress response, ribosome biogenesis and in those bacteria that undergo differentiation, in morphogenesis control. This Caldanaerobacter subterraneus subsp. tengcongensis (strain DSM 15242 / JCM 11007 / NBRC 100824 / MB4) (Thermoanaerobacter tengcongensis) protein is GTPase Obg.